Consider the following 335-residue polypeptide: MSWFTPEVIDVILTVVRAIVVLLAVVVCGALLSFVERRLLGWWQDRYGPNRVGPFGMFQIAADMLKMFFKEDWNPPFVDRMIFTLAPVVAMSALLIAFVVIPITPLWGVADLNIGLLFFFAMAGLSVYAVLFAGWSSNNKYALLGSLRASAQTVSYEVFLGLALMGVVVQVGSFNMRDIVEYQANNLWFIIPQFFGFCTFFIAGVAVTHRHPFDQPEAEQELADGYHIEYAGMKWGMFFVGEYIGIILISALLVTLFFGGWHGPFGILPQVPFLWFALKTAFFIMLFILLRASIPRPRYDQVMDFSWKFCLPLTLINLLVTAAVVLYNTPAVAAQ.

Transmembrane regions (helical) follow at residues 11–31 (VILT…CGAL), 81–101 (MIFT…FVVI), 114–134 (IGLL…LFAG), 154–174 (VSYE…VGSF), 187–207 (LWFI…GVAV), 238–258 (FFVG…TLFF), 270–290 (QVPF…FILL), and 307–327 (WKFC…VVLY).

This sequence belongs to the complex I subunit 1 family. As to quaternary structure, NDH-1 is composed of 13 different subunits. Subunits NuoA, H, J, K, L, M, N constitute the membrane sector of the complex.

The protein localises to the cell inner membrane. It carries out the reaction a quinone + NADH + 5 H(+)(in) = a quinol + NAD(+) + 4 H(+)(out). Functionally, NDH-1 shuttles electrons from NADH, via FMN and iron-sulfur (Fe-S) centers, to quinones in the respiratory chain. The immediate electron acceptor for the enzyme in this species is believed to be ubiquinone. Couples the redox reaction to proton translocation (for every two electrons transferred, four hydrogen ions are translocated across the cytoplasmic membrane), and thus conserves the redox energy in a proton gradient. This subunit may bind ubiquinone. The polypeptide is NADH-quinone oxidoreductase subunit H (Pseudomonas entomophila (strain L48)).